A 221-amino-acid polypeptide reads, in one-letter code: NAD(P)H-hydrate epimerase (221 aa).

Residues 9–219 (MRELETAAVK…NIGLPKELLS (211 aa)) enclose the YjeF N-terminal domain. 60–64 (GNGGD) provides a ligand contact to (6S)-NADPHX. K(+) contacts are provided by N61 and D131. (6S)-NADPHX is bound by residues 135–141 (GIGFKGE), Y146, and D164. S167 is a binding site for K(+).

Belongs to the NnrE/AIBP family. K(+) is required as a cofactor.

It carries out the reaction (6R)-NADHX = (6S)-NADHX. The catalysed reaction is (6R)-NADPHX = (6S)-NADPHX. Catalyzes the epimerization of the S- and R-forms of NAD(P)HX, a damaged form of NAD(P)H that is a result of enzymatic or heat-dependent hydration. This is a prerequisite for the S-specific NAD(P)H-hydrate dehydratase to allow the repair of both epimers of NAD(P)HX. This chain is NAD(P)H-hydrate epimerase, found in Elusimicrobium minutum (strain Pei191).